Reading from the N-terminus, the 486-residue chain is Malonate-semialdehyde dehydrogenase (486 aa).

5 residues coordinate NAD(+): phenylalanine 154, lysine 178, glutamate 181, arginine 182, and serine 231. Cysteine 286 (nucleophile) is an active-site residue. An NAD(+)-binding site is contributed by glutamate 386.

Belongs to the aldehyde dehydrogenase family. IolA subfamily. In terms of assembly, homotetramer.

It catalyses the reaction 3-oxopropanoate + NAD(+) + CoA + H2O = hydrogencarbonate + acetyl-CoA + NADH + H(+). It carries out the reaction 2-methyl-3-oxopropanoate + NAD(+) + CoA + H2O = propanoyl-CoA + hydrogencarbonate + NADH + H(+). The protein operates within polyol metabolism; myo-inositol degradation into acetyl-CoA; acetyl-CoA from myo-inositol: step 7/7. Its function is as follows. Catalyzes the oxidation of malonate semialdehyde (MSA) and methylmalonate semialdehyde (MMSA) into acetyl-CoA and propanoyl-CoA, respectively. Is involved in a myo-inositol catabolic pathway. Bicarbonate, and not CO2, is the end-product of the enzymatic reaction. The protein is Malonate-semialdehyde dehydrogenase of Bacillus cereus (strain G9842).